The sequence spans 232 residues: Mitochondrial import inner membrane translocase subunit Tim21 (232 aa).

The N-terminal 31 residues, 1–31 (MLPRFLWRPVLCSYRALGSPSRSLTVSYRNL), are a transit peptide targeting the mitochondrion. Residues 96-116 (FTYFIVVLIGIGVTGGLFYVV) form a helical membrane-spanning segment.

Belongs to the TIM21 family.

It localises to the mitochondrion membrane. Its function is as follows. May participate in the translocation of transit peptide-containing proteins across the mitochondrial inner membrane. This chain is Mitochondrial import inner membrane translocase subunit Tim21 (timm21), found in Xenopus laevis (African clawed frog).